The following is a 791-amino-acid chain: Disintegrin and metalloproteinase domain-containing protein 1a (791 aa).

Positions 1 to 65 are cleaved as a signal peptide; sequence MSVAAAGRGF…LLIFLPSTFC (65 aa). N-linked (GlcNAc...) asparagine glycosylation is present at Asn-72. Residues 201 to 220 are disordered; sequence CSVTPKDSPGDTSHPPRSRK. The region spanning 235–429 is the Peptidase M12B domain; sequence KYVEMFVVVN…HRGACLLDEP (195 aa). A glycan (N-linked (GlcNAc...) asparagine) is linked at Asn-256. Cystine bridges form between Cys-345/Cys-424, Cys-385/Cys-408, and Cys-387/Cys-393. His-370 provides a ligand contact to Zn(2+). Glu-371 is a catalytic residue. 2 residues coordinate Zn(2+): His-374 and His-380. N-linked (GlcNAc...) asparagine glycans are attached at residues Asn-407 and Asn-484. Residues 438–522 form the Disintegrin domain; it reads AANCGNGVVE…ECPANSYMQD (85 aa). A disulfide bridge links Cys-494 with Cys-514. Asn-630 is a glycosylation site (N-linked (GlcNAc...) asparagine). Residues 663 to 697 form the EGF-like domain; sequence LQYNCEPQEMCHGNGVCNNFKHCHCDAGFAPPDCS. 3 disulfides stabilise this stretch: Cys-667/Cys-679, Cys-673/Cys-685, and Cys-687/Cys-696. The helical transmembrane segment at 741 to 761 threads the bilayer; it reads VMVLVVPIFLVVLLCCLMLIA. The Cytoplasmic portion of the chain corresponds to 762–791; the sequence is YLWSEVQEVVSPPSSSESSSSSSWSDSDSQ. The tract at residues 772–791 is disordered; the sequence is SPPSSSESSSSSSWSDSDSQ.

Heterodimer with ADAM2/fertilin subunit beta. As to expression, testis.

The protein localises to the membrane. In terms of biological role, may be involved in sperm-egg fusion. This is Disintegrin and metalloproteinase domain-containing protein 1a (Adam1a) from Mus musculus (Mouse).